The sequence spans 108 residues: MTSIIYSPKDIFEQEFKTSMRGFDKKEVDEFLDNVIKDYENFNAQIEALKAENEALKKAKYQARNTVSATVQQPVPQPTRVAQSATNFDILKRISKLEKEVFGKQIIE.

Residues 32-69 (LDNVIKDYENFNAQIEALKAENEALKKAKYQARNTVSA) adopt a coiled-coil conformation.

It belongs to the GpsB family. In terms of assembly, forms polymers through the coiled coil domains. Interacts with PBP1, MreC and EzrA.

The protein localises to the cytoplasm. In terms of biological role, divisome component that associates with the complex late in its assembly, after the Z-ring is formed, and is dependent on DivIC and PBP2B for its recruitment to the divisome. Together with EzrA, is a key component of the system that regulates PBP1 localization during cell cycle progression. Its main role could be the removal of PBP1 from the cell pole after pole maturation is completed. Also contributes to the recruitment of PBP1 to the division complex. Not essential for septum formation. The polypeptide is Cell cycle protein GpsB (Streptococcus pyogenes serotype M49 (strain NZ131)).